Consider the following 167-residue polypeptide: CS6 fimbrial subunit B (167 aa).

Residues 1-21 (MLKKIISAIALIAGTSGVVNA) form the signal peptide.

The protein resides in the fimbrium. This chain is CS6 fimbrial subunit B (cssB), found in Escherichia coli.